We begin with the raw amino-acid sequence, 652 residues long: Neuroendocrine convertase 2 (652 aa).

Residues 1–22 form the signal peptide; sequence MKNTHVDLICVFLSIFIGIGEA. The propeptide occupies 23-107; sequence VDVYTNHFHV…QLKGYTRTKR (85 aa). Positions 136–481 constitute a Peptidase S8 domain; the sequence is QWYLKNTGQA…FGVLDAAEMV (346 aa). The N-linked (GlcNAc...) asparagine glycan is linked to N167. Catalysis depends on charge relay system residues D174 and H215. Cystine bridges form between C232–C382 and C324–C354. A glycan (N-linked (GlcNAc...) asparagine) is linked at N290. Residue S390 is the Charge relay system of the active site. N-linked (GlcNAc...) asparagine glycosylation is present at N451. The region spanning 489-625 is the P/Homo B domain; sequence TSPPRYHCTA…ELMLHGTREA (137 aa). A disulfide bridge connects residues C496 and C522. A required for ubiquitination-mediated degradation region spans residues 501–652; the sequence is IDTPHEIPAD…TVQKAHKRSH (152 aa). A glycan (N-linked (GlcNAc...) asparagine) is linked at N542.

The protein belongs to the peptidase S8 family. Furin subfamily. Interacts (via C-terminus) with F-box protein fsn-1 (via SPRY domain); the interaction results in egl-3 proteasomal degradation. In terms of processing, ubiquitinated. As to expression, expressed in head and tail ganglia. Expressed in neurons including mechanosensory and motor neurons, and interneurons (at protein level). Expressed in the nerve ring, ventral nerve cord and intestine.

It localises to the cell projection. It is found in the axon. The protein resides in the cytoplasmic vesicle. The protein localises to the secretory vesicle lumen. Its subcellular location is the secreted. The enzyme catalyses Release of protein hormones and neuropeptides from their precursors, generally by hydrolysis of -Lys-Arg-|- bonds.. Its function is as follows. Serine endoprotease which cleaves preproteins at paired basic amino acids. Processes FMRFamide-like (flp) and neuropeptide-like protein (nlp) neuropeptides. Probably by processing flp-1 and flp-18, modulates the neuronal excitation-inhibition balance and thus the level of activity of the locomotor circuit. Regulates sensitivity to mechanosensory stimuli. By processing neuropeptides, modulates basal acetylcholine release at the ventral cord neuromuscular junctions. Probably by processing flp neuropeptides, regulates the turning step of male mating behavior. Cleaves pro-insulin-like proteins ins-3, ins-4 and ins-6 into their mature active forms. Together with convertase kpc-1, cleaves pro-insulin-like protein ins-18. By controlling ins-4 and ins-6 processing and thus the activation of the daf-2/InsR pathway, negatively modulates synapse development and synaptic transmission at neuromuscular junctions. Similarly, by controlling ins-4 and ins-6 processing, negatively regulates dauer formation under optimal environmental conditions. Under adverse environmental conditions, may promote dauer formation by processing ins-18, a daf-2/InsR antagonist. May cleave dense-core vesicle membrane protein ida-1. Involved in egg-laying, fat storage and locomotion. The sequence is that of Neuroendocrine convertase 2 from Caenorhabditis elegans.